Consider the following 363-residue polypeptide: Flagellar P-ring protein (363 aa).

The N-terminal stretch at 1 to 20 (MKYRLIVALAMLVLSLPSQA) is a signal peptide.

The protein belongs to the FlgI family. The basal body constitutes a major portion of the flagellar organelle and consists of four rings (L,P,S, and M) mounted on a central rod.

Its subcellular location is the periplasm. The protein localises to the bacterial flagellum basal body. Assembles around the rod to form the L-ring and probably protects the motor/basal body from shearing forces during rotation. The polypeptide is Flagellar P-ring protein (Shewanella sp. (strain ANA-3)).